Here is a 97-residue protein sequence, read N- to C-terminus: Protein CYSTEINE-RICH TRANSMEMBRANE MODULE 7 (97 aa).

Positions 1–27 (MASYHVSHDSYQSPGPSPLYQPIIEAP) are disordered. The segment covering 15–27 (GPSPLYQPIIEAP) has biased composition (pro residues). A helical membrane pass occupies residues 68-88 (YVGCFPFLRSCLTTLCCCWFV).

It belongs to the CYSTM1 family. In terms of assembly, homodimer and heterodimers. Interacts with CYSTM3, CYSTM4, CYSTM5, CYSTM6, CYSTM10, WIH1/CYSTM13 and CYSTM11. Binds weakly to CYSTM1, CYSTM2 and CYSTM12. Mostly expressed in siliques and, to a lower extent, in stems, roots, leaves and flowers.

The protein resides in the cell membrane. Its function is as follows. Involved in resistance to abiotic stress. This Arabidopsis thaliana (Mouse-ear cress) protein is Protein CYSTEINE-RICH TRANSMEMBRANE MODULE 7.